We begin with the raw amino-acid sequence, 329 residues long: Beta-ketoacyl-[acyl-carrier-protein] synthase III (329 aa).

Catalysis depends on residues C123 and H256. The segment at 257 to 261 (QANIR) is ACP-binding. N286 is a catalytic residue.

This sequence belongs to the thiolase-like superfamily. FabH family. Homodimer.

The protein resides in the cytoplasm. The catalysed reaction is malonyl-[ACP] + acetyl-CoA + H(+) = 3-oxobutanoyl-[ACP] + CO2 + CoA. It participates in lipid metabolism; fatty acid biosynthesis. Functionally, catalyzes the condensation reaction of fatty acid synthesis by the addition to an acyl acceptor of two carbons from malonyl-ACP. Catalyzes the first condensation reaction which initiates fatty acid synthesis and may therefore play a role in governing the total rate of fatty acid production. Possesses both acetoacetyl-ACP synthase and acetyl transacylase activities. Its substrate specificity determines the biosynthesis of branched-chain and/or straight-chain of fatty acids. The chain is Beta-ketoacyl-[acyl-carrier-protein] synthase III from Burkholderia thailandensis (strain ATCC 700388 / DSM 13276 / CCUG 48851 / CIP 106301 / E264).